The primary structure comprises 506 residues: Protein CYCLOPS (506 aa).

Disordered stretches follow at residues 193 to 223 (TVNS…LDNP) and 385 to 434 (KENL…RSST). The span at 202–219 (TPSQTPTFVSPSSSSTSP) shows a compositional bias: low complexity. Basic and acidic residues predominate over residues 385-394 (KENLKDDRKK). The Nuclear localization signal motif lies at 415 to 418 (KKRR). Basic and acidic residues predominate over residues 422–432 (SRKMAEAKERS). Residues 441-506 (IQVVLKRCET…IERIVSDTNT (66 aa)) are a coiled coil.

It belongs to the CYCLOPS family. In terms of tissue distribution, highly epressed in roots. Expressed at very low levels in leaves, stems and panicles.

It localises to the nucleus. Involved in arbuscular mycorrhizal (AM) symbiosis. Required for fungal infection in roots and arbuscule development during AM symbiosis. The sequence is that of Protein CYCLOPS from Oryza sativa subsp. japonica (Rice).